We begin with the raw amino-acid sequence, 29 residues long: Cyclotide mela-3 (29 aa).

Positions 1–29 (GKPICGETCFKGKCYTPGCTCSYPICKKD) form a cross-link, cyclopeptide (Gly-Asp). Cystine bridges form between Cys-5–Cys-19, Cys-9–Cys-21, and Cys-14–Cys-26.

In terms of processing, this is a cyclic peptide. Contains 3 disulfide bonds.

In terms of biological role, probably participates in a plant defense mechanism (Potential). Binds to and induces leakage in phospholipd membranes, particularly ones containing 1-palmitoyl-2-oleophosphatidylethanolamine (POPE). In vitro, displays cytotoxicity against cultured cells. Not active against Gram-negative bacterium E.coli ATCC 25922 or Gram-positive bacterium S.aureus ATCC 25923 up to a concentration of 64 uM. In Melicytus latifolius (Norfolk Island mahoe), this protein is Cyclotide mela-3.